The sequence spans 190 residues: Glutathione peroxidase 2 (190 aa).

Sec-40 is a catalytic residue. Position 40 (Sec-40) is a non-standard amino acid, selenocysteine.

Belongs to the glutathione peroxidase family. As to quaternary structure, homotetramer. Mostly in liver and gastrointestinal tract, not found in heart or kidney.

It is found in the cytoplasm. The protein resides in the cytosol. It carries out the reaction 2 glutathione + H2O2 = glutathione disulfide + 2 H2O. The enzyme catalyses a hydroperoxy polyunsaturated fatty acid + 2 glutathione = a hydroxy polyunsaturated fatty acid + glutathione disulfide + H2O. It catalyses the reaction tert-butyl hydroperoxide + 2 glutathione = tert-butanol + glutathione disulfide + H2O. The catalysed reaction is cumene hydroperoxide + 2 glutathione = 2-phenylpropan-2-ol + glutathione disulfide + H2O. It carries out the reaction (13S)-hydroperoxy-(9Z,11E)-octadecadienoate + 2 glutathione = (13S)-hydroxy-(9Z,11E)-octadecadienoate + glutathione disulfide + H2O. The enzyme catalyses (5S)-hydroperoxy-(6E,8Z,11Z,14Z)-eicosatetraenoate + 2 glutathione = (5S)-hydroxy-(6E,8Z,11Z,14Z)-eicosatetraenoate + glutathione disulfide + H2O. It catalyses the reaction (12R)-hydroperoxy-(5Z,8Z,10E,14Z)-eicosatetraenoate + 2 glutathione = (12R)-hydroxy-(5Z,8Z,10E,14Z)-eicosatetraenoate + glutathione disulfide + H2O. The catalysed reaction is (15S)-hydroperoxy-(5Z,8Z,11Z,13E)-eicosatetraenoate + 2 glutathione = (15S)-hydroxy-(5Z,8Z,11Z,13E)-eicosatetraenoate + glutathione disulfide + H2O. Functionally, catalyzes the reduction of hydroperoxides in a glutathione-dependent manner thus regulating cellular redox homeostasis. Can reduce small soluble hydroperoxides such as H2O2, cumene hydroperoxide and tert-butyl hydroperoxide, as well as several fatty acid-derived hydroperoxides. Cannot reduce phosphatidycholine hydroperoxide. This Homo sapiens (Human) protein is Glutathione peroxidase 2.